Here is a 392-residue protein sequence, read N- to C-terminus: S-adenosylmethionine synthase (392 aa).

His-17 is an ATP binding site. Asp-19 provides a ligand contact to Mg(2+). Residue Glu-45 coordinates K(+). Residues Glu-58 and Gln-102 each coordinate L-methionine. Positions 102–112 (QSADIAQGVDA) are flexible loop. Residues 169-171 (DAK), 235-236 (KF), Asp-244, 250-251 (RK), Ala-267, and Lys-271 contribute to the ATP site. Residue Asp-244 coordinates L-methionine. Lys-275 is an L-methionine binding site.

Belongs to the AdoMet synthase family. In terms of assembly, homotetramer; dimer of dimers. Requires Mg(2+) as cofactor. K(+) is required as a cofactor.

It is found in the cytoplasm. The enzyme catalyses L-methionine + ATP + H2O = S-adenosyl-L-methionine + phosphate + diphosphate. Its pathway is amino-acid biosynthesis; S-adenosyl-L-methionine biosynthesis; S-adenosyl-L-methionine from L-methionine: step 1/1. Functionally, catalyzes the formation of S-adenosylmethionine (AdoMet) from methionine and ATP. The overall synthetic reaction is composed of two sequential steps, AdoMet formation and the subsequent tripolyphosphate hydrolysis which occurs prior to release of AdoMet from the enzyme. This chain is S-adenosylmethionine synthase, found in Methylobacterium sp. (strain 4-46).